The primary structure comprises 312 residues: Deoxyribonuclease Tat-D (312 aa).

A divalent metal cation contacts are provided by Glu124, His161, His187, and Asp235.

It belongs to the metallo-dependent hydrolases superfamily. TatD-type hydrolase family. The cofactor is a divalent metal cation.

The protein localises to the cytoplasm. The protein resides in the nucleus. Functionally, has both endo- and exonuclease activities. Incises double-stranded DNA without obvious specificity via its endonuclease activity and excises the DNA from the 3'-to 5'-end by its exonuclease activity. May have a role in apoptosis. This chain is Deoxyribonuclease Tat-D, found in Schizosaccharomyces pombe (strain 972 / ATCC 24843) (Fission yeast).